The chain runs to 230 residues: MKQLEELLSTSFDIQFNDLTLLETAFTHTSYANEHRLLNVSHNERLEFLGDAVLQLIISEYLFAKYPKKTEGDMSKLRSMIVREESLAGFSRFCSFDAYIKLGKGEEKSGGRRRDTILGDLFEAFLGALLLDKGIDAVRRFLKQVMIPQVEKGNFERVKDYKTCLQEFLQTKGDVVIDYQVISEKGPAHAKQFEVSIVVNGAVLSKGLGKSKKLAEQDAAKNALAQLSEV.

The RNase III domain occupies 1–134 (MKQLEELLST…FLGALLLDKG (134 aa)). Residue glutamate 47 participates in Mg(2+) binding. Aspartate 51 is an active-site residue. Mg(2+) contacts are provided by aspartate 120 and glutamate 123. The active site involves glutamate 123. In terms of domain architecture, DRBM spans 160–229 (DYKTCLQEFL…AKNALAQLSE (70 aa)).

This sequence belongs to the ribonuclease III family. Homodimer. The cofactor is Mg(2+).

Its subcellular location is the cytoplasm. The catalysed reaction is Endonucleolytic cleavage to 5'-phosphomonoester.. In terms of biological role, digests double-stranded RNA. Involved in the processing of primary rRNA transcript to yield the immediate precursors to the large and small rRNAs (23S and 16S). Processes some mRNAs, and tRNAs when they are encoded in the rRNA operon. Processes pre-crRNA and tracrRNA of type II CRISPR loci if present in the organism. In Streptococcus pyogenes serotype M49 (strain NZ131), this protein is Ribonuclease 3.